The following is a 182-amino-acid chain: Kappa-casein (182 aa).

Positions 1 to 20 are cleaved as a signal peptide; that stretch reads MKSFLLVVNALALTLPFLAV. O-linked (GalNAc...) threonine glycans are attached at residues Thr-133, Thr-143, Thr-148, and Thr-151. The residue at position 157 (Thr-157) is a Phosphothreonine; alternate. Thr-157 carries O-linked (GalNAc...) threonine; alternate glycosylation. O-linked (GalNAc...) threonine glycans are attached at residues Thr-167, Thr-169, and Thr-178.

Belongs to the kappa-casein family. Heteromultimers composed of alpha-s1 casein and kappa casein linked by disulfide bonds. The N-terminus is blocked. As to expression, mammary gland specific. Secreted in milk.

It is found in the secreted. Its function is as follows. Kappa-casein stabilizes micelle formation, preventing casein precipitation in milk. The polypeptide is Kappa-casein (CSN3) (Homo sapiens (Human)).